The chain runs to 413 residues: Probable elongation factor 1-gamma 2 (413 aa).

A GST N-terminal domain is found at 1-82 (MALVMHTYKG…YVSRKNGDNS (82 aa)). Positions 87-215 (SLIEYAHIEQ…AKQTEAVPPV (129 aa)) constitute a GST C-terminal domain. Residues 207–260 (KQTEAVPPVPTKKAPQPAKPKEEPKKAAPVAEAPKPAEEEEAPKPKAKNPLDLL) are disordered. Residues 253–413 (AKNPLDLLPP…EALLDAKCFK (161 aa)) form the EF-1-gamma C-terminal domain.

EF-1 is composed of four subunits: alpha, beta, delta, and gamma.

Functionally, probably plays a role in anchoring the complex to other cellular components. The protein is Probable elongation factor 1-gamma 2 of Arabidopsis thaliana (Mouse-ear cress).